Here is a 495-residue protein sequence, read N- to C-terminus: Iroquois-class homeodomain protein irx-4-B (495 aa).

A DNA-binding region (homeobox; TALE-type) is located at residues 141-203; that stretch reads GSTRRKNATR…NARRRLKKEN (63 aa). Residues 203–245 form a disordered region; that stretch reads NKMTWPPRNKCSDEKRPYDEEEEEEEDSQKATIKNEKKTVDEE. Over residues 235–245 the composition is skewed to basic and acidic residues; that stretch reads IKNEKKTVDEE.

This sequence belongs to the TALE/IRO homeobox family.

It localises to the nucleus. Acts partially redundantly with other irx members in neural patterning. Required for formation of the posterior forebrain, midbrain, hindbrain, and to a lesser extent, spinal cord. Patterns the neuroectoderm in both the anterior/posterior and dorsal/ventral axes. Does not appear to play a role in pronephros kidney development. The sequence is that of Iroquois-class homeodomain protein irx-4-B (irx4-b) from Xenopus laevis (African clawed frog).